Consider the following 62-residue polypeptide: Potassium channel toxin kappa-KTx 1.4 (62 aa).

The N-terminal stretch at 1 to 26 (MKSCLINVSLLILLLLPILGYASVNA) is a signal peptide. Residues 27-38 (ESIDGENDFEEE) constitute a propeptide that is removed on maturation. Cystine bridges form between cysteine 43–cysteine 61 and cysteine 47–cysteine 57.

This sequence belongs to the short scorpion toxin superfamily. Potassium channel inhibitor kappa-KTx family. Kappa-KTx 1 subfamily. Expressed by the venom gland.

It is found in the secreted. Functionally, shows structural homology with WaTx suggesting that it acts as a cell-penetrating peptide (CPP) with defensive purpose that induces pain by specifically activating mammalian sensory neuron TRPA1 channels. Has no effect on the voltage-gated potassium channels tested. The polypeptide is Potassium channel toxin kappa-KTx 1.4 (Heterometrus petersii (Asian forest scorpion)).